The following is a 64-amino-acid chain: Metallothionein (64 aa).

It belongs to the metallothionein superfamily. Type 4 family.

In terms of biological role, metallothioneins have a high content of cysteine residues that bind various heavy metals. This Sterechinus neumayeri (Antarctic sea urchin) protein is Metallothionein.